Consider the following 133-residue polypeptide: ATP synthase epsilon chain, chloroplastic (133 aa).

This sequence belongs to the ATPase epsilon chain family. As to quaternary structure, F-type ATPases have 2 components, CF(1) - the catalytic core - and CF(0) - the membrane proton channel. CF(1) has five subunits: alpha(3), beta(3), gamma(1), delta(1), epsilon(1). CF(0) has three main subunits: a, b and c.

Its subcellular location is the plastid. It is found in the chloroplast thylakoid membrane. Its function is as follows. Produces ATP from ADP in the presence of a proton gradient across the membrane. The polypeptide is ATP synthase epsilon chain, chloroplastic (Gossypium barbadense (Sea Island cotton)).